The primary structure comprises 739 residues: DNA ligase (739 aa).

Positions 1 to 29 (MTANRPALPTRDKAVSDLSATEASDEHAA) are disordered. NAD(+) is bound by residues 51–55 (DADYD), 100–101 (SL), and Glu-134. The active-site N6-AMP-lysine intermediate is Lys-136. Residues Arg-157, Glu-194, Lys-311, and Lys-335 each contribute to the NAD(+) site. Zn(2+) is bound by residues Cys-440, Cys-443, Cys-464, and Cys-470. The segment at 592–612 (PTEMEEASEETPPTRRRKPQG) is disordered. In terms of domain architecture, BRCT spans 662 to 739 (ASTSPVSGKT…TEDEWFDLVG (78 aa)).

It belongs to the NAD-dependent DNA ligase family. LigA subfamily. Requires Mg(2+) as cofactor. Mn(2+) is required as a cofactor.

It carries out the reaction NAD(+) + (deoxyribonucleotide)n-3'-hydroxyl + 5'-phospho-(deoxyribonucleotide)m = (deoxyribonucleotide)n+m + AMP + beta-nicotinamide D-nucleotide.. In terms of biological role, DNA ligase that catalyzes the formation of phosphodiester linkages between 5'-phosphoryl and 3'-hydroxyl groups in double-stranded DNA using NAD as a coenzyme and as the energy source for the reaction. It is essential for DNA replication and repair of damaged DNA. In Azorhizobium caulinodans (strain ATCC 43989 / DSM 5975 / JCM 20966 / LMG 6465 / NBRC 14845 / NCIMB 13405 / ORS 571), this protein is DNA ligase.